The chain runs to 155 residues: Ribosome maturation factor RimP (155 aa).

The protein belongs to the RimP family.

The protein localises to the cytoplasm. Its function is as follows. Required for maturation of 30S ribosomal subunits. The protein is Ribosome maturation factor RimP of Bacteroides fragilis (strain ATCC 25285 / DSM 2151 / CCUG 4856 / JCM 11019 / LMG 10263 / NCTC 9343 / Onslow / VPI 2553 / EN-2).